A 148-amino-acid polypeptide reads, in one-letter code: MPSRLRKTRKLRGHVSHGHGRIGKHRKHPGGRGNAGGLHHHRINFDKYHPGYFGKVGMKHYHLKRNQSFCPTVNLDKLWTLVSEQTRVNAAKNKTGAAPIIDVVRSGYYKVLGKGKLPKQPVIVKAKFFSRRAEEKIKSVGGACVLVA.

Residues 1–30 are compositionally biased toward basic residues; it reads MPSRLRKTRKLRGHVSHGHGRIGKHRKHPG. The tract at residues 1 to 38 is disordered; the sequence is MPSRLRKTRKLRGHVSHGHGRIGKHRKHPGGRGNAGGL. The residue at position 39 (H39) is a (3S)-3-hydroxyhistidine. N6-acetyllysine occurs at positions 47 and 55. S68 bears the Phosphoserine mark. K110 carries the N6-acetyllysine modification.

Belongs to the universal ribosomal protein uL15 family. Component of the large ribosomal subunit. Hydroxylated on His-39 by MINA.

Its subcellular location is the cytoplasm. Its function is as follows. Component of the large ribosomal subunit. The ribosome is a large ribonucleoprotein complex responsible for the synthesis of proteins in the cell. The sequence is that of Large ribosomal subunit protein uL15 (RPL27A) from Homo sapiens (Human).